The chain runs to 341 residues: UDP-N-acetylenolpyruvoylglucosamine reductase (341 aa).

Positions 13–185 (FGVEQSCLSM…TAVGLRLPKA (173 aa)) constitute an FAD-binding PCMH-type domain. The active site involves arginine 161. The active-site Proton donor is the serine 231. The active site involves glutamate 327.

This sequence belongs to the MurB family. Requires FAD as cofactor.

The protein localises to the cytoplasm. The enzyme catalyses UDP-N-acetyl-alpha-D-muramate + NADP(+) = UDP-N-acetyl-3-O-(1-carboxyvinyl)-alpha-D-glucosamine + NADPH + H(+). It functions in the pathway cell wall biogenesis; peptidoglycan biosynthesis. Functionally, cell wall formation. The sequence is that of UDP-N-acetylenolpyruvoylglucosamine reductase from Shewanella sp. (strain MR-4).